Reading from the N-terminus, the 123-residue chain is Nitrogenase-stabilizing/protective protein NifW (123 aa).

It belongs to the NifW family. Homotrimer; associates with NifD.

Functionally, may protect the nitrogenase Fe-Mo protein from oxidative damage. In Rhodopseudomonas palustris (strain HaA2), this protein is Nitrogenase-stabilizing/protective protein NifW.